A 517-amino-acid chain; its full sequence is Ubiquitin carboxyl-terminal hydrolase 30 (517 aa).

The Mitochondrial intermembrane segment spans residues 1–35; the sequence is MLSSRAQAARTAADKALQRFLRTGAAVRYKVMKNW. A helical membrane pass occupies residues 36–56; it reads GVIGGIAAALAAGIYVIWGPI. The Cytoplasmic portion of the chain corresponds to 57-517; that stretch reads TERKKRRKGL…QQGREYRSEE (461 aa). In terms of domain architecture, USP spans 68–502; sequence PGLVNLGNTC…SAYLLFYERV (435 aa). The active-site Nucleophile is the C77. The interval 198 to 221 is disordered; it reads MAPRQVTCHTRGSPHPTTNHWKSQ. The segment covering 204 to 218 has biased composition (polar residues); it reads TCHTRGSPHPTTNHW. Residues K235 and K289 each participate in a glycyl lysine isopeptide (Lys-Gly) (interchain with G-Cter in ubiquitin) cross-link. The segment at 364–395 is disordered; that stretch reads SQHGPKATENPGSAPEVQDAQAAPKPGLSQPG. The Proton acceptor role is filled by H452.

The protein belongs to the peptidase C19 family. In terms of processing, ubiquitinated by parkin (PRKN) at Lys-235 and Lys-289, leading to its degradation.

The protein localises to the mitochondrion outer membrane. It carries out the reaction Thiol-dependent hydrolysis of ester, thioester, amide, peptide and isopeptide bonds formed by the C-terminal Gly of ubiquitin (a 76-residue protein attached to proteins as an intracellular targeting signal).. With respect to regulation, inhibited by the diterpenoid derivative 15-oxospiramilactone (S3). Deubiquitinating enzyme tethered to the mitochondrial outer membrane that acts as a key inhibitor of mitophagy by counteracting the action of parkin (PRKN): hydrolyzes ubiquitin attached by parkin on target proteins, such as RHOT1/MIRO1 and TOMM20, thereby blocking parkin's ability to drive mitophagy. Preferentially cleaves 'Lys-6'- and 'Lys-11'-linked polyubiquitin chains, 2 types of linkage that participate in mitophagic signaling. Does not cleave efficiently polyubiquitin phosphorylated at 'Ser-65'. Acts as negative regulator of mitochondrial fusion by mediating deubiquitination of MFN1 and MFN2. This Mus musculus (Mouse) protein is Ubiquitin carboxyl-terminal hydrolase 30 (Usp30).